The primary structure comprises 323 residues: Small ribosomal subunit protein uS2 (323 aa).

The segment at 295–323 (VVNRDRAGFNKKQPKAEEAAKPAEKKAEK) is disordered.

Belongs to the universal ribosomal protein uS2 family.

This chain is Small ribosomal subunit protein uS2, found in Mycoplasmoides gallisepticum (strain R(low / passage 15 / clone 2)) (Mycoplasma gallisepticum).